The primary structure comprises 286 residues: UDP-3-O-acyl-N-acetylglucosamine deacetylase (286 aa).

The Zn(2+) site is built by His-79, His-237, and Asp-241. His-264 functions as the Proton donor in the catalytic mechanism.

The protein belongs to the LpxC family. Requires Zn(2+) as cofactor.

The enzyme catalyses a UDP-3-O-[(3R)-3-hydroxyacyl]-N-acetyl-alpha-D-glucosamine + H2O = a UDP-3-O-[(3R)-3-hydroxyacyl]-alpha-D-glucosamine + acetate. It functions in the pathway glycolipid biosynthesis; lipid IV(A) biosynthesis; lipid IV(A) from (3R)-3-hydroxytetradecanoyl-[acyl-carrier-protein] and UDP-N-acetyl-alpha-D-glucosamine: step 2/6. Functionally, catalyzes the hydrolysis of UDP-3-O-myristoyl-N-acetylglucosamine to form UDP-3-O-myristoylglucosamine and acetate, the committed step in lipid A biosynthesis. This is UDP-3-O-acyl-N-acetylglucosamine deacetylase from Brucella melitensis biotype 2 (strain ATCC 23457).